A 1040-amino-acid polypeptide reads, in one-letter code: Multidrug resistance protein MdtB (1040 aa).

Transmembrane regions (helical) follow at residues 16–36 (FIMRPVATTLLMVAILLAGII), 342–362 (DTQFELMLAIALVVMIIYLFL), 369–389 (IIPGVAVPLSLVGTFAVMVFL), 396–416 (LTLMALTIATGFVVDDAIVVI), 440–460 (IGFTIISLTFSLIAVLIPLLF), 472–492 (FAVTLAVAILISAVVSLTLTP), 537–557 (WLTLGVALSTLALSIILWVFI), 863–883 (LGSTVWLVVAAVVAMYIVLGV), 888–908 (FIHPITILSTLPTAGVGALLA), 911–931 (LAGSELDVIAIIGIILLIGIV), 968–988 (ILMTTLAALLGALPLMLSTGV), and 998–1018 (IGMVGGLMLSQVLTLFTTPVI).

It belongs to the resistance-nodulation-cell division (RND) (TC 2.A.6) family. MdtB subfamily. In terms of assembly, part of a tripartite efflux system composed of MdtA, MdtB and MdtC. MdtB forms a heteromultimer with MdtC.

The protein localises to the cell inner membrane. This chain is Multidrug resistance protein MdtB, found in Klebsiella pneumoniae (strain 342).